Consider the following 318-residue polypeptide: 26 kDa endochitinase 1 (318 aa).

Residues 1 to 19 form the signal peptide; the sequence is MRAFVLFAVVAMAATMAVA. The 40-residue stretch at 20–59 folds into the Chitin-binding type-1 domain; sequence EQCGSQAGGATCPNCLCCSRFGWCGSTPYCGDGCQSQCSG. 7 cysteine pairs are disulfide-bonded: C22/C37, C31/C43, C36/C49, C53/C57, C98/C160, C172/C180, and C279/C311. The active-site Proton donor is E142.

Belongs to the glycosyl hydrolase 19 family. Chitinase class I subfamily.

The enzyme catalyses Random endo-hydrolysis of N-acetyl-beta-D-glucosaminide (1-&gt;4)-beta-linkages in chitin and chitodextrins.. Functionally, defense against chitin-containing fungal pathogens. The sequence is that of 26 kDa endochitinase 1 from Hordeum vulgare (Barley).